The primary structure comprises 201 residues: CASP-like protein 1F2 (201 aa).

The Cytoplasmic portion of the chain corresponds to 1 to 29 (MITSIATTTAGAFEVKSLGFIPYPSQPKR). Residues 30 to 50 (IFFMAQVIFRILAIAFAVASI) traverse the membrane as a helical segment. Residues 51-78 (SAMVTSDQNVIVFGMDTAARYSYSSAFR) are Extracellular-facing. The chain crosses the membrane as a helical span at residues 79-99 (FLVGANAVVCGFSVLSLIFVC). Topologically, residues 100–119 (LMSRRSEAILEKNYYLFLHD) are cytoplasmic. A helical transmembrane segment spans residues 120–140 (MVMMVMMVSGCSAATAIGYVG). Residues 141–162 (RYGEKEITWTAVCDFVGKFCNQ) are Extracellular-facing. The helical transmembrane segment at 163–183 (ALVSIVLAYLALFCYVALTTL) threads the bilayer. At 184 to 201 (AAHKLNHSSSTAAIRQNE) the chain is on the cytoplasmic side.

The protein belongs to the Casparian strip membrane proteins (CASP) family. In terms of assembly, homodimer and heterodimers.

It is found in the cell membrane. The chain is CASP-like protein 1F2 from Ricinus communis (Castor bean).